Consider the following 96-residue polypeptide: Small ribosomal subunit protein bS6 (96 aa).

It belongs to the bacterial ribosomal protein bS6 family.

Binds together with bS18 to 16S ribosomal RNA. The polypeptide is Small ribosomal subunit protein bS6 (Cutibacterium acnes (strain DSM 16379 / KPA171202) (Propionibacterium acnes)).